Here is a 426-residue protein sequence, read N- to C-terminus: 5-aminovalerate aminotransferase DavT (426 aa).

Residues 112-113 (GS), Y139, and 240-243 (DEVQ) contribute to the pyridoxal 5'-phosphate site. N6-(pyridoxal phosphate)lysine is present on K269. Position 298 (T298) interacts with pyridoxal 5'-phosphate.

Belongs to the class-III pyridoxal-phosphate-dependent aminotransferase family. Pyridoxal 5'-phosphate serves as cofactor.

It catalyses the reaction 5-aminopentanoate + 2-oxoglutarate = 5-oxopentanoate + L-glutamate. Catalyzes the conversion of 5-aminovalerate to 5-oxopentanoate. The sequence is that of 5-aminovalerate aminotransferase DavT (davT) from Pseudomonas aeruginosa (strain ATCC 15692 / DSM 22644 / CIP 104116 / JCM 14847 / LMG 12228 / 1C / PRS 101 / PAO1).